Reading from the N-terminus, the 460-residue chain is Chromosomal replication initiator protein DnaA (460 aa).

The tract at residues 1 to 83 (MENIWLEAQT…EFHVADEKPE (83 aa)) is domain I, interacts with DnaA modulators. Over residues 78–121 (ADEKPEAAPEEKPEKEGKPAREKEKDKDKEKEKDREKEKDKKEL) the composition is skewed to basic and acidic residues. A disordered region spans residues 78 to 122 (ADEKPEAAPEEKPEKEGKPAREKEKDKDKEKEKDREKEKDKKELV). Residues 83-123 (EAAPEEKPEKEGKPAREKEKDKDKEKEKDREKEKDKKELVP) are domain II. The segment at 124–340 (NLNPKYTFES…GMLIRLEAFA (217 aa)) is domain III, AAA+ region. Residues G168, G170, K171, and T172 each coordinate ATP. Residues 341 to 460 (SLTGQEITLS…VEDIRKKLFT (120 aa)) are domain IV, binds dsDNA.

Belongs to the DnaA family. As to quaternary structure, oligomerizes as a right-handed, spiral filament on DNA at oriC.

The protein resides in the cytoplasm. Plays an essential role in the initiation and regulation of chromosomal replication. ATP-DnaA binds to the origin of replication (oriC) to initiate formation of the DNA replication initiation complex once per cell cycle. Binds the DnaA box (a 9 base pair repeat at the origin) and separates the double-stranded (ds)DNA. Forms a right-handed helical filament on oriC DNA; dsDNA binds to the exterior of the filament while single-stranded (ss)DNA is stabiized in the filament's interior. The ATP-DnaA-oriC complex binds and stabilizes one strand of the AT-rich DNA unwinding element (DUE), permitting loading of DNA polymerase. After initiation quickly degrades to an ADP-DnaA complex that is not apt for DNA replication. Binds acidic phospholipids. This Geobacter sp. (strain M21) protein is Chromosomal replication initiator protein DnaA.